We begin with the raw amino-acid sequence, 1064 residues long: Carbamoyl phosphate synthase pyrimidine-specific large chain (1064 aa).

A carboxyphosphate synthetic domain region spans residues 1–401 (MPKRRDIETI…SLLKAVRSLE (401 aa)). ATP contacts are provided by Arg129, Arg169, Gly175, Gly176, Arg208, Ile210, Gly241, Ile242, His243, Gln284, and Glu298. Residues 133 to 327 (RALMNELGEP…IAKLAAKIAV (195 aa)) enclose the ATP-grasp 1 domain. The Mg(2+) site is built by Gln284, Glu298, and Asn300. Positions 284, 298, and 300 each coordinate Mn(2+). An oligomerization domain region spans residues 402-546 (IGVHHLELNE…YSTYEEENES (145 aa)). The interval 547–929 (IVTEKPSVIV…ALYKGLVASG (383 aa)) is carbamoyl phosphate synthetic domain. The 191-residue stretch at 671–861 (EQALSELGIP…MANLATKAIL (191 aa)) folds into the ATP-grasp 2 domain. The ATP site is built by Arg707, Arg746, Ile748, Glu752, Gly777, Val778, His779, Ser780, Gln820, and Glu832. Gln820, Glu832, and Asn834 together coordinate Mg(2+). The Mn(2+) site is built by Gln820, Glu832, and Asn834. An MGS-like domain is found at 930–1064 (IQIQPHGAVL…TAMTEGLVRS (135 aa)). The interval 930–1064 (IQIQPHGAVL…TAMTEGLVRS (135 aa)) is allosteric domain.

It belongs to the CarB family. Composed of two chains; the small (or glutamine) chain promotes the hydrolysis of glutamine to ammonia, which is used by the large (or ammonia) chain to synthesize carbamoyl phosphate. Tetramer of heterodimers (alpha,beta)4. The cofactor is Mg(2+). It depends on Mn(2+) as a cofactor.

It carries out the reaction hydrogencarbonate + L-glutamine + 2 ATP + H2O = carbamoyl phosphate + L-glutamate + 2 ADP + phosphate + 2 H(+). The catalysed reaction is hydrogencarbonate + NH4(+) + 2 ATP = carbamoyl phosphate + 2 ADP + phosphate + 2 H(+). It functions in the pathway amino-acid biosynthesis; L-arginine biosynthesis; carbamoyl phosphate from bicarbonate: step 1/1. Its pathway is pyrimidine metabolism; UMP biosynthesis via de novo pathway; (S)-dihydroorotate from bicarbonate: step 1/3. Its function is as follows. Small subunit of the glutamine-dependent carbamoyl phosphate synthetase (CPSase). CPSase catalyzes the formation of carbamoyl phosphate from the ammonia moiety of glutamine, carbonate, and phosphate donated by ATP, constituting the first step of the biosynthetic pathway leading to pyrimidine nucleotides. The large subunit (synthetase) binds the substrates ammonia (free or transferred from glutamine from the small subunit), hydrogencarbonate and ATP and carries out an ATP-coupled ligase reaction, activating hydrogencarbonate by forming carboxy phosphate which reacts with ammonia to form carbamoyl phosphate. This Geobacillus stearothermophilus (Bacillus stearothermophilus) protein is Carbamoyl phosphate synthase pyrimidine-specific large chain (pyrAB).